The sequence spans 320 residues: o-succinylbenzoate synthase (320 aa).

The active-site Proton donor is the Lys-133. 3 residues coordinate Mg(2+): Asp-161, Glu-190, and Asp-213. Lys-235 serves as the catalytic Proton acceptor.

This sequence belongs to the mandelate racemase/muconate lactonizing enzyme family. MenC type 1 subfamily. The cofactor is a divalent metal cation.

The catalysed reaction is (1R,6R)-6-hydroxy-2-succinyl-cyclohexa-2,4-diene-1-carboxylate = 2-succinylbenzoate + H2O. The protein operates within quinol/quinone metabolism; 1,4-dihydroxy-2-naphthoate biosynthesis; 1,4-dihydroxy-2-naphthoate from chorismate: step 4/7. It participates in quinol/quinone metabolism; menaquinone biosynthesis. Its function is as follows. Converts 2-succinyl-6-hydroxy-2,4-cyclohexadiene-1-carboxylate (SHCHC) to 2-succinylbenzoate (OSB). This chain is o-succinylbenzoate synthase, found in Salmonella arizonae (strain ATCC BAA-731 / CDC346-86 / RSK2980).